A 418-amino-acid chain; its full sequence is Alditol oxidase (418 aa).

In terms of domain architecture, FAD-binding PCMH-type spans 13–179 (ITYTAKELLR…TSLTLDLEPA (167 aa)). FAD is bound by residues 41–47 (VLGSGHS), Ser-106, Ser-111, Gly-114, 118–121 (TGTH), and Val-169. Position 46 is a pros-8alpha-FAD histidine (His-46). Ser-106 is a binding site for D-sorbitol. Ser-106 provides a ligand contact to xylitol. Residues Glu-320, Arg-322, and Thr-345 each coordinate D-sorbitol. Glu-320, Arg-322, and Thr-345 together coordinate xylitol. Arg-322 contributes to the FAD binding site. Residue His-372 participates in FAD binding. Lys-375 is a D-sorbitol binding site. Lys-375 contributes to the xylitol binding site.

This sequence belongs to the oxygen-dependent FAD-linked oxidoreductase family. As to quaternary structure, monomer. The cofactor is FAD.

It catalyses the reaction an alditol + O2 = an aldose + H2O2. The enzyme catalyses xylitol + O2 = D-xylose + H2O2. It carries out the reaction D-sorbitol + O2 = D-glucose + H2O2. Its function is as follows. Oxidase that performs selective oxidation of the terminal primary hydroxyl group of several alditols, with a reduction of O2 to H2O2. Shows highest activity on xylitol and D-sorbitol, and a poor efficiency with D-mannitol and L-threitol. This is Alditol oxidase (xyoA) from Streptomyces coelicolor (strain ATCC BAA-471 / A3(2) / M145).